Consider the following 251-residue polypeptide: 3-dehydroquinate dehydratase (251 aa).

3-dehydroquinate is bound by residues 47-49 (EWR) and R83. H144 functions as the Proton donor/acceptor in the catalytic mechanism. K171 acts as the Schiff-base intermediate with substrate in catalysis. Positions 214, 233, and 237 each coordinate 3-dehydroquinate.

It belongs to the type-I 3-dehydroquinase family. As to quaternary structure, homodimer.

It catalyses the reaction 3-dehydroquinate = 3-dehydroshikimate + H2O. It functions in the pathway metabolic intermediate biosynthesis; chorismate biosynthesis; chorismate from D-erythrose 4-phosphate and phosphoenolpyruvate: step 3/7. Its function is as follows. Involved in the third step of the chorismate pathway, which leads to the biosynthesis of aromatic amino acids. Catalyzes the cis-dehydration of 3-dehydroquinate (DHQ) and introduces the first double bond of the aromatic ring to yield 3-dehydroshikimate. This is 3-dehydroquinate dehydratase from Klebsiella pneumoniae (strain 342).